Consider the following 205-residue polypeptide: MPFYRRSAGSPAGHPLSRLLVLSGPSGVGKDTILREVRERHPGLYVSVSATTRPPRPGEVDGRDYRFLSAAEFEEWIATDDLLEWACYVGNYYGTPKTPVLERLAVGEPVVLEIDVQGALQVKNNFPAAMLVFIRPPSLEVLAERLRSRGTDAPEAIERRLARAREELALADRFDHQVVNDKLAAAVEAVERLLFEEIPDEPAGG.

In terms of domain architecture, Guanylate kinase-like spans 17 to 195; the sequence is SRLLVLSGPS…AVEAVERLLF (179 aa). 24–31 is an ATP binding site; it reads GPSGVGKD.

The protein belongs to the guanylate kinase family.

It localises to the cytoplasm. It carries out the reaction GMP + ATP = GDP + ADP. Functionally, essential for recycling GMP and indirectly, cGMP. The chain is Guanylate kinase from Gloeobacter violaceus (strain ATCC 29082 / PCC 7421).